The following is a 196-amino-acid chain: Proteasome subunit beta 1 (196 aa).

Residues 1–6 constitute a propeptide, removed in mature form; by autocatalysis; that stretch reads MEELPA. Residue T7 is the Nucleophile of the active site.

The protein belongs to the peptidase T1B family. The 20S proteasome core is composed of 14 alpha and 14 beta subunits that assemble into four stacked heptameric rings, resulting in a barrel-shaped structure. The two inner rings, each composed of seven catalytic beta subunits, are sandwiched by two outer rings, each composed of seven alpha subunits. The catalytic chamber with the active sites is on the inside of the barrel. Has a gated structure, the ends of the cylinder being occluded by the N-termini of the alpha-subunits. Is capped at one or both ends by the proteasome regulatory ATPase, PAN.

It is found in the cytoplasm. The catalysed reaction is Cleavage of peptide bonds with very broad specificity.. The formation of the proteasomal ATPase PAN-20S proteasome complex, via the docking of the C-termini of PAN into the intersubunit pockets in the alpha-rings, triggers opening of the gate for substrate entry. Interconversion between the open-gate and close-gate conformations leads to a dynamic regulation of the 20S proteasome proteolysis activity. Its function is as follows. Component of the proteasome core, a large protease complex with broad specificity involved in protein degradation. The sequence is that of Proteasome subunit beta 1 from Saccharolobus solfataricus (strain ATCC 35092 / DSM 1617 / JCM 11322 / P2) (Sulfolobus solfataricus).